We begin with the raw amino-acid sequence, 179 residues long: MIIYKDIISGDEVLSDNFKIKEVDGVLYECDCRKYLKRKNEDIQLEGANPSAEEGDDDAGGDGEEVMVHDIEDQFRLVWLKTEEGMKPSKDAFKSHLKTYMKKVLAKLQEKGVPEAEIDAFKKGAPAAVKKILANYDNYDVLMGHSMDGDAMHVLIDFREDGVTPYATLWKHGLEEMKV.

Residues 1–179 (MIIYKDIISG…WKHGLEEMKV (179 aa)) enclose the TCTP domain.

The protein belongs to the TCTP family.

It localises to the cytoplasm. The protein resides in the cytoskeleton. Functionally, involved in protein synthesis. Involved in microtubule stabilization. In Aspergillus fumigatus (strain ATCC MYA-4609 / CBS 101355 / FGSC A1100 / Af293) (Neosartorya fumigata), this protein is Translationally-controlled tumor protein homolog.